The following is a 227-amino-acid chain: Ribosomal RNA small subunit methyltransferase G (227 aa).

Residues Gly74, Leu79, 124–125 (AE), and Arg142 contribute to the S-adenosyl-L-methionine site.

This sequence belongs to the methyltransferase superfamily. RNA methyltransferase RsmG family.

Its subcellular location is the cytoplasm. Its function is as follows. Specifically methylates the N7 position of guanine in position 518 of 16S rRNA. The protein is Ribosomal RNA small subunit methyltransferase G of Mycolicibacterium gilvum (strain PYR-GCK) (Mycobacterium gilvum (strain PYR-GCK)).